Here is a 316-residue protein sequence, read N- to C-terminus: Chitin synthase export chaperone (316 aa).

7 consecutive transmembrane segments (helical) span residues 62-82 (VIFD…ILII), 99-119 (LYFF…DCGV), 130-150 (FVAI…IIGF), 170-190 (TSML…KAWI), 200-220 (ASGM…VFVI), 233-253 (LWVT…QVLV), and 266-286 (HYLD…MMVY).

It belongs to the CHS7 family. As to quaternary structure, interacts with CHS3.

It localises to the endoplasmic reticulum membrane. In terms of biological role, chaperone required for the export of the chitin synthase CHS3 from the endoplasmic reticulum. This Saccharomyces cerevisiae (strain ATCC 204508 / S288c) (Baker's yeast) protein is Chitin synthase export chaperone (CHS7).